The sequence spans 668 residues: Ras guanine nucleotide exchange factor D (668 aa).

Residues 27–224 (KKLESIFGIA…LMVMDIDEFD (198 aa)) enclose the Rho-GAP domain. The 126-residue stretch at 237–362 (GESIVKAATF…YFQTFFKPVI (126 aa)) folds into the N-terminal Ras-GEF domain. Residues 433-663 (GSNIIAQQIT…HSISHKLEPR (231 aa)) form the Ras-GEF domain.

In terms of biological role, promotes the exchange of Ras-bound GDP by GTP. The chain is Ras guanine nucleotide exchange factor D (gefD) from Dictyostelium discoideum (Social amoeba).